Here is a 71-residue protein sequence, read N- to C-terminus: Defensin-like protein 292 (71 aa).

Disulfide bonds link C44–C64, C50–C69, and C56–C71.

Belongs to the DEFL family.

The chain is Defensin-like protein 292 from Arabidopsis thaliana (Mouse-ear cress).